The following is a 97-amino-acid chain: ESAT-6-like protein EsxG (97 aa).

The protein belongs to the WXG100 family. CFP-10 subfamily. In terms of assembly, forms a tight 1:1 complex with EsxH.

The protein resides in the secreted. The polypeptide is ESAT-6-like protein EsxG (Mycolicibacterium smegmatis (strain ATCC 700084 / mc(2)155) (Mycobacterium smegmatis)).